A 653-amino-acid polypeptide reads, in one-letter code: MFSSSILTIISSIDNFITIIVNNLKKWWSDITLQTRIMAMTTLMVSLLMSSLPSGLKLISKQETRLVDNRFGKDLSLLLAVNITPILEGNNYLQLQQFIEHFYLSTSSIRYILVFNAEGQIYYSIPFSSETVVNLFSLSDYECLRSEIYYFSNTPIVNTPNHLEGEIIDIIIPLNKEKKLLGVLNIGINSNPTLTTSSQLTRDVSVAVFVSIWLMVILGAAFNAFTITKPIRELLTGVKNIASGDFHQRISLPFGGELGALIFNFNEMAERLEKYEQQNVEKLTSEKAKLETLVSTIADGAILLDKDLRVILVNRTAIENFGWEGKDIAGSMIIDYLPEDINQQLFPALNDIVRKNFLEQSLCETQEICIKLQKNYKKTFRVLLTTVLDYKYSILKGIAITIQDRTEEVELNEVKNQFISNVSHELRTPLFNIRSFLETLYEYHDSLDNRQKLEFLAIANKETERLTRLVNDVLDLSRLESDQEYPLQSMDLVSAIEQTVRTYQLSAKDKKIDLHIDIEENLPCILGNYSLVLQILANLIGNSLKFTHSDGIIVLRTYRINDSASKLNSTPLQIQKVRVEICDTGIGISKKNQERIFARFLRIENYVHTLEGTGLGLSIVKNIIQKHNSEIHLYSELKNGSCFFFDLIIAKDT.

2 helical membrane passes run 39–59 (AMTT…LKLI) and 207–227 (AVFV…AFTI). The HAMP domain maps to 225–277 (FTITKPIRELLTGVKNIASGDFHQRISLPFGGELGALIFNFNEMAERLEKYEQ). In terms of domain architecture, PAS spans 286 to 356 (EKAKLETLVS…PALNDIVRKN (71 aa)). Residues 421 to 651 (NVSHELRTPL…CFFFDLIIAK (231 aa)) form the Histidine kinase domain. The residue at position 424 (His424) is a Phosphohistidine; by autocatalysis.

The protein resides in the plastid. It is found in the chloroplast membrane. It carries out the reaction ATP + protein L-histidine = ADP + protein N-phospho-L-histidine.. This is an uncharacterized protein from Pyropia yezoensis (Susabi-nori).